We begin with the raw amino-acid sequence, 191 residues long: Insulin-like peptide INSL6 (191 aa).

Positions 1–22 (MKQLCCSCLLWLGLLLTPFSRE) are cleaved as a signal peptide. 3 disulfides stabilise this stretch: cysteine 33-cysteine 172, cysteine 45-cysteine 185, and cysteine 171-cysteine 176. Residues 53-161 (FEMEEQSPMT…RSLFWGNHSQ (109 aa)) constitute a propeptide, connecting peptide.

This sequence belongs to the insulin family.

The protein resides in the secreted. Its function is as follows. May have a role in sperm development and fertilization. The protein is Insulin-like peptide INSL6 (Insl6) of Mus musculus (Mouse).